A 230-amino-acid polypeptide reads, in one-letter code: Protein GrpE (230 aa).

Disordered regions lie at residues 1–28 (MADE…EALK) and 209–230 (GVSK…EDNA). Over residues 221–230 (NGASTSEDNA) the composition is skewed to polar residues.

Belongs to the GrpE family. Homodimer.

It localises to the cytoplasm. In terms of biological role, participates actively in the response to hyperosmotic and heat shock by preventing the aggregation of stress-denatured proteins, in association with DnaK and GrpE. It is the nucleotide exchange factor for DnaK and may function as a thermosensor. Unfolded proteins bind initially to DnaJ; upon interaction with the DnaJ-bound protein, DnaK hydrolyzes its bound ATP, resulting in the formation of a stable complex. GrpE releases ADP from DnaK; ATP binding to DnaK triggers the release of the substrate protein, thus completing the reaction cycle. Several rounds of ATP-dependent interactions between DnaJ, DnaK and GrpE are required for fully efficient folding. The chain is Protein GrpE from Brucella ovis (strain ATCC 25840 / 63/290 / NCTC 10512).